We begin with the raw amino-acid sequence, 302 residues long: Heme A synthase (302 aa).

The Cytoplasmic portion of the chain corresponds to 1–8 (MFSKKNLK). Residues 9–29 (WLSVLATVIMAFVQLGGALVT) traverse the membrane as a helical segment. At 30–67 (KTGSADGCGSDWPLCHGAFLPQNLPIQTLIELSHRAVS) the chain is on the extracellular side. A disulfide bridge connects residues Cys37 and Cys44. Glu60 is an active-site residue. Residue His63 participates in heme o binding. The helical transmembrane segment at 68-88 (GLSLIVVLWLVIVAWKHIGYI) threads the bilayer. Over 89–93 (KEVKP) the chain is Cytoplasmic. A helical membrane pass occupies residues 94–114 (LSCISVGFLLIQALVGAAAVM). Over 115–122 (WQQNAYVL) the chain is Extracellular. The chain crosses the membrane as a helical span at residues 123-143 (ALHFGISLISFSSVFVLTLII). His125 contributes to the heme o binding site. Topologically, residues 144–161 (YEVDRKYEADELFIRKPL) are cytoplasmic. A helical membrane pass occupies residues 162-182 (RIYTWIMALIVYMTIYTGALV). The Extracellular portion of the chain corresponds to 183-215 (RHKEASLAYGQWPLPFNDLMPHNVQDWVNLTHR). Residue His214 participates in heme b binding. The helical transmembrane segment at 216–236 (GMALIAFIWILITFIHAVNNY) threads the bilayer. Over 237-244 (RENRTIRY) the chain is Cytoplasmic. Residues 245–265 (GYTAAFILVILQVTTGALSII) form a helical membrane-spanning segment. Topologically, residues 266-271 (TEVNLF) are extracellular. The chain crosses the membrane as a helical span at residues 272–292 (IALLHALFITLLFGLIAYFII). His276 is a binding site for heme b. At 293–302 (LMLRTIRSGG) the chain is on the cytoplasmic side.

The protein belongs to the COX15/CtaA family. Type 1 subfamily. Interacts with CtaB. Heme b serves as cofactor.

It is found in the cell membrane. It catalyses the reaction Fe(II)-heme o + 2 A + H2O = Fe(II)-heme a + 2 AH2. It functions in the pathway porphyrin-containing compound metabolism; heme A biosynthesis; heme A from heme O: step 1/1. In terms of biological role, catalyzes the conversion of heme O to heme A by two successive hydroxylations of the methyl group at C8. The first hydroxylation forms heme I, the second hydroxylation results in an unstable dihydroxymethyl group, which spontaneously dehydrates, resulting in the formyl group of heme A. This chain is Heme A synthase, found in Staphylococcus saprophyticus subsp. saprophyticus (strain ATCC 15305 / DSM 20229 / NCIMB 8711 / NCTC 7292 / S-41).